Consider the following 119-residue polypeptide: Ethylene-responsive proteinase inhibitor 1 (119 aa).

Positions M1 to A27 are cleaved as a signal peptide. A propeptide spanning residues Q28–Q48 is cleaved from the precursor.

Belongs to the protease inhibitor I13 (potato type I serine protease inhibitor) family.

It localises to the secreted. This chain is Ethylene-responsive proteinase inhibitor 1, found in Solanum lycopersicum (Tomato).